The chain runs to 340 residues: Replication factor C subunit 2 (340 aa).

59 to 66 (GSPGTGKT) is an ATP binding site.

Belongs to the activator 1 small subunits family. As to quaternary structure, heteropentamer of subunits rfc1, rfc2, rfc3, rfc4 and rfc5 that forms a complex (RFC) with PCNA in the presence of ATP. Two other complexes exist where rfc1 can be replaced by either ctf18 or elg1 to form the ctf18-RFC or the elg1-RFC complexes respectively.

The protein resides in the nucleus. The elongation of primed DNA templates by DNA polymerase delta and epsilon requires the action of the accessory proteins PCNA and activator 1. Subunit 2 binds ATP and single-stranded DNA. The polypeptide is Replication factor C subunit 2 (rfc2) (Schizosaccharomyces pombe (strain 972 / ATCC 24843) (Fission yeast)).